The sequence spans 161 residues: uncharacterized protein (161 aa).

This is an uncharacterized protein from Mycobacterium tuberculosis (strain CDC 1551 / Oshkosh).